The chain runs to 415 residues: Very late expression factor 1 (415 aa).

The Tyr recombinase domain occupies Arg171 to Asp357. Catalysis depends on residues Arg214, Lys242, Arg307, and His330. The interval Tyr339–Asn415 is disordered. Tyr343 acts as the O-(3'-phospho-DNA)-tyrosine intermediate in catalysis. The span at Gly346–Asp363 shows a compositional bias: acidic residues. Residues Asn375–Ser404 are compositionally biased toward low complexity.

This sequence belongs to the 'phage' integrase family.

Functionally, involved in very late gene activation. This chain is Very late expression factor 1 (VLF-1), found in Heliothis zea nuclear polyhedrosis virus (HzSNPV).